Reading from the N-terminus, the 105-residue chain is uncharacterized protein (105 aa).

A helical transmembrane segment spans residues glycine 41–phenylalanine 62.

The protein localises to the membrane. This is an uncharacterized protein from Saccharomyces cerevisiae (strain ATCC 204508 / S288c) (Baker's yeast).